We begin with the raw amino-acid sequence, 176 residues long: NAD(P)H-quinone oxidoreductase subunit 6, chloroplastic (176 aa).

5 helical membrane-spanning segments follow: residues 10-30, 32-52, 63-83, 92-112, and 152-172; these read FLLVFLGSGLILGSLGVVLLT, PIFSAFSLGLVLVCISLFYIL, LLIYVGAINILIIFAVMFMNS, LWTVGDGITLIVCTSIFVSLV, and FFLPFELISIILLVALIGTIV.

This sequence belongs to the complex I subunit 6 family. NDH is composed of at least 16 different subunits, 5 of which are encoded in the nucleus.

The protein localises to the plastid. Its subcellular location is the chloroplast thylakoid membrane. It carries out the reaction a plastoquinone + NADH + (n+1) H(+)(in) = a plastoquinol + NAD(+) + n H(+)(out). The catalysed reaction is a plastoquinone + NADPH + (n+1) H(+)(in) = a plastoquinol + NADP(+) + n H(+)(out). NDH shuttles electrons from NAD(P)H:plastoquinone, via FMN and iron-sulfur (Fe-S) centers, to quinones in the photosynthetic chain and possibly in a chloroplast respiratory chain. The immediate electron acceptor for the enzyme in this species is believed to be plastoquinone. Couples the redox reaction to proton translocation, and thus conserves the redox energy in a proton gradient. This Cicer arietinum (Chickpea) protein is NAD(P)H-quinone oxidoreductase subunit 6, chloroplastic (ndhG).